The chain runs to 479 residues: Solute carrier family 7 member 13 (479 aa).

Residues 1–14 (MAMDIEKKIYLKRQ) are Cytoplasmic-facing. The chain crosses the membrane as a helical span at residues 15-35 (LGYFWGTNFLIINIIGAGIFV). Topologically, residues 36-47 (SPKGVLQYSSMN) are extracellular. Residues 48–68 (VGVSLCVWVFCAVLSMTSTLC) form a helical membrane-spanning segment. The Cytoplasmic portion of the chain corresponds to 69-89 (AAEIGITFPYTVAHYYFLKRC). Residues 90 to 110 (FGPFVAFLRLWTSLFTGPGVL) traverse the membrane as a helical segment. At 111–129 (ASQALLLAEYGIQPFYPSC) the chain is on the extracellular side. The chain crosses the membrane as a helical span at residues 130 to 150 (SAPAVPKKCLALAMLWIVGIL). Residues 151–165 (NSRGVKELSWLQTVS) are Cytoplasmic-facing. A helical transmembrane segment spans residues 166–186 (MVLKMGILSFISLSGLFLLVT). At 187–208 (GRKENVRRLQNAFDAEFPEVSR) the chain is on the extracellular side. Residues 209–229 (LIEAIFQGYFAFSGGGSFTYV) form a helical membrane-spanning segment. The Cytoplasmic segment spans residues 230-242 (AGELKEPSKTIPR). The helical transmembrane segment at 243–263 (CIFTALPLVTVVYLLANLSYL) threads the bilayer. Topologically, residues 264–289 (TVLSPQELLSSDAVALTWTDRVIPQL) are extracellular. Residues 290 to 310 (TWSVPFAISASLFSNLVTSVF) form a helical membrane-spanning segment. The Cytoplasmic portion of the chain corresponds to 311-338 (ETSRTSYIASRNGQLPLLCSTLNVHSSP). Residues 339–359 (FIAVLLDVSMGSIAIVLTNLI) traverse the membrane as a helical segment. E360 is a topological domain (extracellular). The helical transmembrane segment at 361 to 381 (LINYLFFVFSIWTVLSVIGIL) threads the bilayer. The Cytoplasmic portion of the chain corresponds to 382-396 (KLRYQEPNLHRPYKV). Residues 397–417 (FSPFLFITAAISLSMVLIPLI) form a helical membrane-spanning segment. Over 418 to 423 (KSPKMQ) the chain is Extracellular. A helical membrane pass occupies residues 424 to 444 (YIYVFLFFLGGLLFYVPLIHF). At 445 to 479 (KLKLIWFQKLTCYLQLLFNICIPDVSDEHVAEEES) the chain is on the cytoplasmic side.

This sequence belongs to the amino acid-polyamine-organocation (APC) superfamily. As to quaternary structure, disulfide-linked heterodimer composed of the catalytic light subunit SLC7A13 and the heavy subunit SLC3A1.

Its subcellular location is the apical cell membrane. The catalysed reaction is L-cystine(out) + L-aspartate(in) = L-cystine(in) + L-aspartate(out). It catalyses the reaction L-cystine(out) = L-cystine(in). The enzyme catalyses L-aspartate(in) + L-glutamate(out) = L-aspartate(out) + L-glutamate(in). It carries out the reaction L-aspartate(in) + L-glutamine(out) = L-aspartate(out) + L-glutamine(in). The catalysed reaction is L-aspartate(in) + L-methionine(out) = L-aspartate(out) + L-methionine(in). It catalyses the reaction L-leucine(out) + L-aspartate(in) = L-leucine(in) + L-aspartate(out). The enzyme catalyses L-valine(out) + L-aspartate(in) = L-valine(in) + L-aspartate(out). It carries out the reaction L-aspartate(in) + L-phenylalanine(out) = L-aspartate(out) + L-phenylalanine(in). The catalysed reaction is L-tyrosine(out) + L-aspartate(in) = L-tyrosine(in) + L-aspartate(out). It catalyses the reaction L-tryptophan(out) + L-aspartate(in) = L-tryptophan(in) + L-aspartate(out). In terms of biological role, associates with SLC3A1/rBAT to form a functional heterodimeric complex that transports anionic and neutral amino acids across the apical plasma membrane of renal epithelium. Preferentially mediates exchange transport, but can also operate via facilitated diffusion. May act as a major transporter for L-cystine in late proximal tubules, ensuring its reabsorption from the luminal fluid in exchange for cytosolic L-glutamate or L-aspartate. In Rattus norvegicus (Rat), this protein is Solute carrier family 7 member 13 (Slc7a13).